An 860-amino-acid polypeptide reads, in one-letter code: Probable linoleate 9S-lipoxygenase 4 (860 aa).

One can recognise a PLAT domain in the interval 29 to 159; the sequence is NALDFTDLAG…RYKSDRIFFA (131 aa). The Lipoxygenase domain maps to 162–860; it reads PYLPSETPEL…GKGIPNSVSI (699 aa). Positions 209 to 246 are disordered; the sequence is PDQGKENVRTTLGGSADYPYPRRGRTGRPPTRTDPKSE. Histidine 521, histidine 526, histidine 712, asparagine 716, and isoleucine 860 together coordinate Fe cation.

It belongs to the lipoxygenase family. As to quaternary structure, monomer. Requires Fe cation as cofactor. As to expression, expressed in tubers and roots. Not detected in leaves, flowers, stems, shoot tips, or axillary buds.

The protein resides in the cytoplasm. The enzyme catalyses (9Z,12Z)-octadecadienoate + O2 = (9S)-hydroperoxy-(10E,12Z)-octadecadienoate. It functions in the pathway lipid metabolism; oxylipin biosynthesis. Functionally, plant lipoxygenases may be involved in a number of diverse aspects of plant physiology including growth and development, pest resistance, and senescence or responses to wounding. Catalyzes the hydroperoxidation of lipids containing a cis,cis-1,4-pentadiene structure. The polypeptide is Probable linoleate 9S-lipoxygenase 4 (LOX1.4) (Solanum tuberosum (Potato)).